The sequence spans 505 residues: COMPASS component BRE2 (505 aa).

Residues 70 to 295 (SANPFFTILG…LKQETTNKEF (226 aa)) enclose the B30.2/SPRY domain. Residue Ser-227 is modified to Phosphoserine. Residues 271-290 (EPWREDAENGPSRKKLKQET) form a disordered region. Residue Lys-318 coordinates DNA. The interval 398–420 (RDESNDKNTTSAKKKKQQQKKKK) is disordered. The segment covering 409–420 (AKKKKQQQKKKK) has biased composition (basic residues).

It belongs to the cclA family. In terms of assembly, component of the Set1C/COMPASS complex which consists of SET1(2), BRE2(2), SPP1(2), SDC1(1), SHG1(1), SWD1(1), SWD2(1), and SWD3(1). Interacts directly with SDC1.

The protein resides in the nucleus. It is found in the chromosome. The protein localises to the telomere. In terms of biological role, component of the Set1C/COMPASS complex that specifically mono-, di- and trimethylates histone H3 to form H3K4me1/2/3, which subsequently plays a role in telomere length maintenance and transcription elongation regulation. COMPASS recognizes ubiquitinated H2B on one face of the nucleosome which stimulates the methylation of H3 on the opposing face. This Saccharomyces cerevisiae (strain ATCC 204508 / S288c) (Baker's yeast) protein is COMPASS component BRE2.